A 509-amino-acid chain; its full sequence is ATP synthase subunit alpha (509 aa).

An ATP-binding site is contributed by 169-176; that stretch reads GDRQTGKT.

Belongs to the ATPase alpha/beta chains family. As to quaternary structure, F-type ATPases have 2 components, CF(1) - the catalytic core - and CF(0) - the membrane proton channel. CF(1) has five subunits: alpha(3), beta(3), gamma(1), delta(1), epsilon(1). CF(0) has three main subunits: a(1), b(2) and c(9-12). The alpha and beta chains form an alternating ring which encloses part of the gamma chain. CF(1) is attached to CF(0) by a central stalk formed by the gamma and epsilon chains, while a peripheral stalk is formed by the delta and b chains.

It is found in the cell inner membrane. The enzyme catalyses ATP + H2O + 4 H(+)(in) = ADP + phosphate + 5 H(+)(out). In terms of biological role, produces ATP from ADP in the presence of a proton gradient across the membrane. The alpha chain is a regulatory subunit. The polypeptide is ATP synthase subunit alpha (Methylobacterium sp. (strain 4-46)).